Here is a 242-residue protein sequence, read N- to C-terminus: MTEAVPSSALSEVSLRLLCHDDIDTVKHLCGDWFPIEYPDSWYRDITSNKKFFSLAATYRGDIVGMIVAEIKNRTKIHKEDGDILASSFSVDTQVAYILSLGVVKEFRKHGIGSLLLESLKDHISTTAQDHCKAIYLHVLTTNNTAISFYENRDFKQHHYLPYYYSIRGVLKDGFTYVLYINGGHPPWTILDYIQHLGSALANLSPCSIPHRIYRQAQSLLCSFLPWSSISTKGGIEYSRTM.

Residues 1 to 192 (MTEAVPSSAL…GGHPPWTILD (192 aa)) are Cytoplasmic-facing. The region spanning 13 to 182 (VSLRLLCHDD…DGFTYVLYIN (170 aa)) is the N-acetyltransferase domain. Position 38 (Tyr-38) interacts with substrate. N6-acetyllysine; by autocatalysis is present on Lys-79. The active site involves Tyr-97. A substrate-binding site is contributed by Leu-99. Residue 101–103 (LGV) coordinates acetyl-CoA. N6-acetyllysine; by autocatalysis is present on residues Lys-105, Lys-109, and Lys-121. Position 109-114 (109-114 (KHGIGS)) interacts with acetyl-CoA. His-138 is an active-site residue. Acetyl-CoA is bound by residues Asn-143 and 150-153 (YENR). Lys-156 is modified (N6-acetyllysine; by autocatalysis). The required for homodimerization stretch occupies residues 162–173 (PYYYSIRGVLKD). Tyr-165 is a binding site for substrate. The helical intramembrane region spans 193 to 236 (YIQHLGSALANLSPCSIPHRIYRQAQSLLCSFLPWSSISTKGGI). Topologically, residues 237 to 242 (EYSRTM) are cytoplasmic.

This sequence belongs to the acetyltransferase family. NAA60 subfamily. In terms of assembly, monomer and homodimer; monomer in presence of substrate and homodimer in its absence. Acetylated: autoacetylation is required for optimal acetyltransferase activity.

It localises to the golgi apparatus membrane. The catalysed reaction is N-terminal L-methionyl-[transmembrane protein] + acetyl-CoA = N-terminal N(alpha)-acetyl-L-methionyl-[transmembrane protein] + CoA + H(+). It carries out the reaction L-lysyl-[protein] + acetyl-CoA = N(6)-acetyl-L-lysyl-[protein] + CoA + H(+). In terms of biological role, N-alpha-acetyltransferase that specifically mediates the acetylation of N-terminal residues of the transmembrane proteins, with a strong preference for N-termini facing the cytosol. Displays N-terminal acetyltransferase activity towards a range of N-terminal sequences including those starting with Met-Lys, Met-Val, Met-Ala and Met-Met. Required for normal chromosomal segregation during anaphase. May also show histone acetyltransferase activity; such results are however unclear in vivo and would require additional experimental evidences. The sequence is that of N-alpha-acetyltransferase 60 (NAA60) from Bos taurus (Bovine).